Reading from the N-terminus, the 477-residue chain is Serine/threonine-protein kinase pakC (477 aa).

In terms of domain architecture, PH spans 13-108 (SPDKEGELKK…WMKAVEKGSE (96 aa)). Residues 112–125 (VSQPFNLKHEVHVD) form the CRIB domain. A Protein kinase domain is found at 204–458 (YKNMTKIGEG…ATDLLKHPFM (255 aa)). ATP-binding positions include 210 to 218 (IGEGAAGEV) and K233. The Proton acceptor role is filled by D326.

It belongs to the protein kinase superfamily. STE Ser/Thr protein kinase family. STE20 subfamily. In terms of assembly, interacts with GTP-bound racB. It depends on Mg(2+) as a cofactor.

It localises to the cytoplasm. The protein localises to the membrane. The catalysed reaction is L-seryl-[protein] + ATP = O-phospho-L-seryl-[protein] + ADP + H(+). The enzyme catalyses L-threonyl-[protein] + ATP = O-phospho-L-threonyl-[protein] + ADP + H(+). With respect to regulation, kinase activity is rapidly and transiently increased in response to chemoattractant stimulation. Its function is as follows. Has role in the regulation of chemotaxis. The sequence is that of Serine/threonine-protein kinase pakC (pakC) from Dictyostelium discoideum (Social amoeba).